We begin with the raw amino-acid sequence, 133 residues long: Large ribosomal subunit protein uL16c (133 aa).

Belongs to the universal ribosomal protein uL16 family. Part of the 50S ribosomal subunit.

It localises to the plastid. The chain is Large ribosomal subunit protein uL16c from Euglena longa (Euglenophycean alga).